The primary structure comprises 102 residues: Large ribosomal subunit protein bL21 (102 aa).

It belongs to the bacterial ribosomal protein bL21 family. In terms of assembly, part of the 50S ribosomal subunit. Contacts protein L20.

This protein binds to 23S rRNA in the presence of protein L20. This is Large ribosomal subunit protein bL21 from Bacillus subtilis (strain 168).